Here is a 221-residue protein sequence, read N- to C-terminus: Deoxyribose-phosphate aldolase (221 aa).

Asp-89 acts as the Proton donor/acceptor in catalysis. The active-site Schiff-base intermediate with acetaldehyde is the Lys-151. The Proton donor/acceptor role is filled by Lys-180.

This sequence belongs to the DeoC/FbaB aldolase family. DeoC type 1 subfamily.

It localises to the cytoplasm. The enzyme catalyses 2-deoxy-D-ribose 5-phosphate = D-glyceraldehyde 3-phosphate + acetaldehyde. Its pathway is carbohydrate degradation; 2-deoxy-D-ribose 1-phosphate degradation; D-glyceraldehyde 3-phosphate and acetaldehyde from 2-deoxy-alpha-D-ribose 1-phosphate: step 2/2. Functionally, catalyzes a reversible aldol reaction between acetaldehyde and D-glyceraldehyde 3-phosphate to generate 2-deoxy-D-ribose 5-phosphate. The polypeptide is Deoxyribose-phosphate aldolase (Brevibacillus brevis (strain 47 / JCM 6285 / NBRC 100599)).